Reading from the N-terminus, the 1360-residue chain is S-layer protein A (1360 aa).

The N-terminal stretch at 1 to 24 is a signal peptide; that stretch reads MNKSAIRYLSLLLVFLMGGSFLAG.

The protein belongs to the Sulfolobales SlaA family. In terms of assembly, the mushroom-shaped unit cells of the Sulfolobales' S-layers may consist of three SlaB subunits and six SlaA subunits.

It localises to the secreted. It is found in the cell wall. The protein resides in the S-layer. Functionally, S-layer large protein. May form the highly ordered outer sheath. This is S-layer protein A from Metallosphaera sedula (strain ATCC 51363 / DSM 5348 / JCM 9185 / NBRC 15509 / TH2).